Consider the following 238-residue polypeptide: Tetraspanin-4 (238 aa).

Over Met1 to Met13 the chain is Cytoplasmic. A helical membrane pass occupies residues Phe14–Leu34. Residues Ala35 to Asn55 lie on the Extracellular side of the membrane. A helical transmembrane segment spans residues Leu56–Ile76. Topologically, residues Lys77 to Thr85 are cytoplasmic. The chain crosses the membrane as a helical span at residues Phe86–Ala106. The Extracellular portion of the chain corresponds to Tyr107 to Asn201. N-linked (GlcNAc...) asparagine glycans are attached at residues Asn152 and Asn161. The chain crosses the membrane as a helical span at residues Leu202–Phe222. The Cytoplasmic segment spans residues Ala223 to Ala238.

Belongs to the tetraspanin (TM4SF) family. Forms a complex with integrins.

Its subcellular location is the membrane. In Pongo abelii (Sumatran orangutan), this protein is Tetraspanin-4 (TSPAN4).